A 453-amino-acid chain; its full sequence is Collagen alpha-4(IV) chain (453 aa).

A disordered region spans residues 1–218 (GPPGPPGAPG…PPGPMGDPGP (218 aa)). Residues 1 to 222 (GPPGPPGAPG…MGDPGPIGFG (222 aa)) are triple-helical region. Pro residues-rich tracts occupy residues 26 to 44 (QGPP…PGPP), 60 to 72 (PGPP…PGPP), and 95 to 122 (PQGP…PLGP). The segment covering 153 to 162 (PEGTMGLPGM) has biased composition (low complexity). Residues 174-183 (PGLDGRRGED) show a composition bias toward basic and acidic residues. Residues 206 to 215 (APGPPGPMGD) show a composition bias toward pro residues. Residues 228–453 (GFLLVLHSQT…SRCQVCVKHS (226 aa)) enclose the Collagen IV NC1 domain. 6 disulfides stabilise this stretch: cysteine 243–cysteine 332, cysteine 276–cysteine 329, cysteine 288–cysteine 294, cysteine 351–cysteine 449, cysteine 385–cysteine 446, and cysteine 397–cysteine 404.

The protein belongs to the type IV collagen family. There are six type IV collagen isoforms, alpha 1(IV)-alpha 6(IV), each of which can form a triple helix structure with 2 other chains to generate type IV collagen network. The alpha 3(IV) chain forms a triple helical protomer with alpha 4(IV) and alpha 5(IV); this triple helical structure dimerizes through NC1-NC1 domain interactions such that the alpha 3(IV), alpha 4(IV) and alpha 5(IV) chains of one protomer connect with the alpha 5(IV), alpha 4(IV) and alpha 3(IV) chains of the opposite protomer, respectively. Associates with LAMB2 at the neuromuscular junction and in GBM. Prolines at the third position of the tripeptide repeating unit (G-X-Y) are hydroxylated in some or all of the chains. In terms of processing, type IV collagens contain numerous cysteine residues which are involved in inter- and intramolecular disulfide bonding. 12 of these, located in the NC1 domain, are conserved in all known type IV collagens. Post-translationally, the trimeric structure of the NC1 domains is stabilized by covalent bonds between Lys and Met residues. Alpha 3 and alpha 4 type IV collagens are colocalized and present only in basement membranes of kidney, eye, cochlea, lung and brain.

The protein resides in the secreted. It is found in the extracellular space. It localises to the extracellular matrix. The protein localises to the basement membrane. Functionally, type IV collagen is the major structural component of glomerular basement membranes (GBM), forming a 'chicken-wire' meshwork together with laminins, proteoglycans and entactin/nidogen. The protein is Collagen alpha-4(IV) chain (COL4A4) of Bos taurus (Bovine).